The primary structure comprises 462 residues: Glutamate--tRNA ligase 2 (462 aa).

Residues 8-18 (PSPTGLLHVGG) carry the 'HIGH' region motif. Positions 227–231 (PLSKR) match the 'KMSKS' region motif. Lysine 230 lines the ATP pocket.

This sequence belongs to the class-I aminoacyl-tRNA synthetase family. Glutamate--tRNA ligase type 1 subfamily. Monomer.

The protein localises to the cytoplasm. It catalyses the reaction tRNA(Glu) + L-glutamate + ATP = L-glutamyl-tRNA(Glu) + AMP + diphosphate. In terms of biological role, catalyzes the attachment of glutamate to tRNA(Glu) in a two-step reaction: glutamate is first activated by ATP to form Glu-AMP and then transferred to the acceptor end of tRNA(Glu). This is Glutamate--tRNA ligase 2 from Thermosipho melanesiensis (strain DSM 12029 / CIP 104789 / BI429).